Here is a 250-residue protein sequence, read N- to C-terminus: MSHNFHVIIPARYHSSRFPGKLLQEINGITVIERVYRQALLAEPKSVIIATDHDEIADRAIQFGAEVVITSHTHQTGTDRIAEVVAKGSFAPDDVIVNVQGDEPFIRPKLIQQVACSLTKTKAPVSTLCWPISSLQILNNPNVVKVVCTRDNHALYFSRSAIPFHRDDKNAYSNTFRHIGLYAYRAAFLLEFVSWPPCALEQIECLEQLRILWSGFSIRVDEACEEPLQDINTKEDLILAQQYFLDTFNV.

This sequence belongs to the KdsB family.

Its subcellular location is the cytoplasm. It carries out the reaction 3-deoxy-alpha-D-manno-oct-2-ulosonate + CTP = CMP-3-deoxy-beta-D-manno-octulosonate + diphosphate. The protein operates within nucleotide-sugar biosynthesis; CMP-3-deoxy-D-manno-octulosonate biosynthesis; CMP-3-deoxy-D-manno-octulosonate from 3-deoxy-D-manno-octulosonate and CTP: step 1/1. It functions in the pathway bacterial outer membrane biogenesis; lipopolysaccharide biosynthesis. Activates KDO (a required 8-carbon sugar) for incorporation into bacterial lipopolysaccharide in Gram-negative bacteria. This chain is 3-deoxy-manno-octulosonate cytidylyltransferase, found in Legionella pneumophila (strain Paris).